The primary structure comprises 222 residues: Large ribosomal subunit protein uL3 (222 aa).

The tract at residues 129 to 150 is disordered; sequence HNFRGLPDSHGTERKHRSPGSI.

Belongs to the universal ribosomal protein uL3 family. Part of the 50S ribosomal subunit. Forms a cluster with proteins L14 and L19.

Its function is as follows. One of the primary rRNA binding proteins, it binds directly near the 3'-end of the 23S rRNA, where it nucleates assembly of the 50S subunit. The polypeptide is Large ribosomal subunit protein uL3 (Acidothermus cellulolyticus (strain ATCC 43068 / DSM 8971 / 11B)).